The sequence spans 1178 residues: DNA-directed RNA polymerase subunit beta (1178 aa).

Residues 1–37 form a disordered region; sequence MLEGCILPDFGQSKTDVSPSQSRPQSSPNNSVPGAPN. The segment covering 17–33 has biased composition (low complexity); the sequence is VSPSQSRPQSSPNNSVP.

This sequence belongs to the RNA polymerase beta chain family. As to quaternary structure, the RNAP catalytic core consists of 2 alpha, 1 beta, 1 beta' and 1 omega subunit. When a sigma factor is associated with the core the holoenzyme is formed, which can initiate transcription.

The catalysed reaction is RNA(n) + a ribonucleoside 5'-triphosphate = RNA(n+1) + diphosphate. Functionally, DNA-dependent RNA polymerase catalyzes the transcription of DNA into RNA using the four ribonucleoside triphosphates as substrates. This is DNA-directed RNA polymerase subunit beta from Mycobacterium leprae (strain Br4923).